Here is a 191-residue protein sequence, read N- to C-terminus: Thymidylate kinase (191 aa).

Residue 7 to 14 (GIDGVGKS) coordinates ATP.

Belongs to the thymidylate kinase family.

The enzyme catalyses dTMP + ATP = dTDP + ADP. In terms of biological role, phosphorylation of dTMP to form dTDP in both de novo and salvage pathways of dTTP synthesis. The chain is Thymidylate kinase from Helicobacter acinonychis (strain Sheeba).